A 169-amino-acid chain; its full sequence is MERAIFAGGCFWCMVQPFEEQAGILSVRSGYTGGHVPNPSYEQVCSKTTGHTEAVEIIFDPSLISYSDLVELYWAQTDPTDAFGQFEDRGDNYRPVIYYTDERQREIAERSKQTLQASGRFDQPIVTSIKPAEPFYLAEDYHQGFYQKNPERYAQSSAIRHQFLEEHWQ.

C10 is a catalytic residue.

The protein belongs to the MsrA Met sulfoxide reductase family.

It carries out the reaction L-methionyl-[protein] + [thioredoxin]-disulfide + H2O = L-methionyl-(S)-S-oxide-[protein] + [thioredoxin]-dithiol. It catalyses the reaction [thioredoxin]-disulfide + L-methionine + H2O = L-methionine (S)-S-oxide + [thioredoxin]-dithiol. Its function is as follows. Has an important function as a repair enzyme for proteins that have been inactivated by oxidation. Catalyzes the reversible oxidation-reduction of methionine sulfoxide in proteins to methionine. The protein is Peptide methionine sulfoxide reductase MsrA of Streptococcus equi subsp. zooepidemicus (strain H70).